The chain runs to 949 residues: Inactive atromentin synthetase invA3 (949 aa).

The interval 38–460 (RAVSQYPNHE…SGRIKDTVVV (423 aa)) is adenylation (A) domain. In terms of domain architecture, Carrier spans 592–670 (ALSTETEKTL…NLAKYVDSLV (79 aa)). Residues 597–667 (TEKTLAGIYA…VISNLAKYVD (71 aa)) are thiolation and peptide carrier (T) domain. S629 is modified (O-(pantetheine 4'-phosphoryl)serine). Residues 693–934 (PIFMVHPGMA…YTLMDFDHVA (242 aa)) form a thioesterase (TE) domain region.

It belongs to the ATP-dependent AMP-binding enzyme family.

Inactive atromentin synthetase homolog. While the invA3 adenylation (A) domain is capable of adenylating 4-hydroxyphenylpyruvate (4-HPP), the invA3 enzyme is inactive because of its non-functional thioesterase (TE) domain. This chain is Inactive atromentin synthetase invA3 (invA3), found in Paxillus involutus (Naked brimcap).